The chain runs to 296 residues: MLTFQEIILKLHHYWASKGCAIIQPLDMEVGAGTFHPATTLRAIGPEPWTAAYVQPSRRPTDGRYGENPNRTQHYYQYQVVMKPSPDDIQELYLGSLRELGIDPLENDIRFVEDNWESPTLGAWGLGWEVWSNGMEITQFTYFQQVGGLECKPVMGEITYGLERLAMYIQNVDSMYDILWANTQNGPLYYRDVFLQNEVEMSTYNFEEANVEELFKQFDLLEKEGYRLIEKNLPIPAYEFVLKASHTFNLLDARHAISVTERQGYILRVRKLALEVAKEYYSAREKLGFPAFKKDN.

The protein belongs to the class-II aminoacyl-tRNA synthetase family. Tetramer of two alpha and two beta subunits.

It localises to the cytoplasm. It carries out the reaction tRNA(Gly) + glycine + ATP = glycyl-tRNA(Gly) + AMP + diphosphate. The polypeptide is Glycine--tRNA ligase alpha subunit (Francisella tularensis subsp. novicida (strain U112)).